An 835-amino-acid chain; its full sequence is Leucine--tRNA ligase (835 aa).

The short motif at 42–52 (PYPSGRIHMGH) is the 'HIGH' region element. The short motif at 612 to 616 (KMSKS) is the 'KMSKS' region element. ATP is bound at residue K615.

Belongs to the class-I aminoacyl-tRNA synthetase family.

It is found in the cytoplasm. The catalysed reaction is tRNA(Leu) + L-leucine + ATP = L-leucyl-tRNA(Leu) + AMP + diphosphate. The sequence is that of Leucine--tRNA ligase from Rhizorhabdus wittichii (strain DSM 6014 / CCUG 31198 / JCM 15750 / NBRC 105917 / EY 4224 / RW1) (Sphingomonas wittichii).